A 72-amino-acid polypeptide reads, in one-letter code: Conotoxin VnMKLT2-011 (72 aa).

The first 23 residues, 1–23, serve as a signal peptide directing secretion; sequence MMKLTCVLIIAVLFLTACQLTTA. The propeptide occupies 24–42; that stretch reads ETRDEYRAVRSSDEVRNSR. Intrachain disulfides connect cysteine 44–cysteine 57, cysteine 51–cysteine 62, and cysteine 56–cysteine 71.

Belongs to the conotoxin O1 superfamily. As to expression, expressed by the venom duct.

The protein resides in the secreted. In Conus ventricosus (Mediterranean cone), this protein is Conotoxin VnMKLT2-011.